The following is a 727-amino-acid chain: Pentatricopeptide repeat-containing protein At4g20740 (727 aa).

Residues 1–84 are disordered; the sequence is MKSPKPPNLS…PSPPSHSTVI (84 aa). A compositionally biased stretch (polar residues) spans 38–56; the sequence is SNRQSIPRVSPQPQSNSLA. Residues 59–70 show a composition bias toward basic and acidic residues; it reads TPFDLRKWDPET. PPR repeat units follow at residues 157–191, 192–226, 227–261, 262–296, 297–331, 332–366, 367–401, 402–436, 437–471, 506–540, 541–575, 576–606, 612–646, and 647–681; these read DFAA…GRPP, SEKQ…GFKP, RVFL…GLVE, ESTT…LCKP, DVFA…EIKP, DVMA…QILI, DREI…GYIA, DIGI…ELEP, DFET…GYPV, SVSV…GFEP, DSSS…SCVP, SIAA…CLGN, MEFK…GVFI, and NEVI…KVMT.

It belongs to the PPR family. P subfamily.

This chain is Pentatricopeptide repeat-containing protein At4g20740, found in Arabidopsis thaliana (Mouse-ear cress).